We begin with the raw amino-acid sequence, 474 residues long: MTSPTVSDAASAPIRTVPIAAIATAPGRGGIGVVRVSGPDVRAVMQAVCGRLLPPRQATYLPFLDADGAAIDRGIALWFPAPHSYTGEDVLELQGHGGPVVMQLLLSRCLRAGHGIGLRVAEPGEFTRRAFLNDKLDLAQAEAVADLIEASTEAAARSAARSLDGVFSQTVHALVERVIHLRMLVEATLDFPEEEIDFLEAADARGQLADIRARLDGVLAQARQGALLREGLHVVLAGQPNVGKSSLLNALAGAELAIVTPIAGTTRDKVQQTIQIEGIPLNIVDTAGLRDTEDEVERIGIERTWAAIARADVVLHLLDAADYRAHGLSAEDAAIDARIAEHVPPGVPTLRVINKIDLAGAAVPGRVDAQPPEVWLSARDGSGIELLRAALLEIAGWQGGGEGLYLARERHLSALRSAREHLTIAADHADQRAQSLDLFAEELRLAQEALNSITGAFSSDDLLGVIFSRFCIGK.

(6S)-5-formyl-5,6,7,8-tetrahydrofolate-binding residues include R35, E92, and K135. In terms of domain architecture, TrmE-type G spans 231-396; the sequence is GLHVVLAGQP…LRAALLEIAG (166 aa). N241 provides a ligand contact to K(+). Residues 241–246, 260–266, 285–288, and 377–379 each bind GTP; these read NVGKSS, TPIAGTT, DTAG, and SAR. Position 245 (S245) interacts with Mg(2+). Residues T260, I262, and T265 each coordinate K(+). A Mg(2+)-binding site is contributed by T266. (6S)-5-formyl-5,6,7,8-tetrahydrofolate is bound at residue K474.

The protein belongs to the TRAFAC class TrmE-Era-EngA-EngB-Septin-like GTPase superfamily. TrmE GTPase family. As to quaternary structure, homodimer. Heterotetramer of two MnmE and two MnmG subunits. Requires K(+) as cofactor.

The protein localises to the cytoplasm. Functionally, exhibits a very high intrinsic GTPase hydrolysis rate. Involved in the addition of a carboxymethylaminomethyl (cmnm) group at the wobble position (U34) of certain tRNAs, forming tRNA-cmnm(5)s(2)U34. The protein is tRNA modification GTPase MnmE of Ralstonia nicotianae (strain ATCC BAA-1114 / GMI1000) (Ralstonia solanacearum).